A 316-amino-acid polypeptide reads, in one-letter code: MNELDGIKQFTTVVADSGDIESIRHYHPQDATTNPSLLLKAAGLSQYEHLIDDAIAWGKKNGKTQEQQVVAACDKLAVNFGAEILKIVPGRVSTEVDARLSFDKEKSIEKARHLVDLYQQQGVEKSRILIKLASTWEGIRAAEELEKEGINCNLTLLFSFAQARACAEAGVFLISPFVGRIYDWYQARKPMDPYVVEEDPGVKSVRNIYDYYKQHHYETIVMGASFRRTEQILALTGCDRLTIAPNLLKELQEKVSPVVRKLIPPSQTFPRPAPMSEAEFRWEHNQDAMAVEKLSEGIRLFAVDQRKLEDLLAAKL.

Lysine 131 (schiff-base intermediate with substrate) is an active-site residue.

The protein belongs to the transaldolase family. Type 1 subfamily. As to quaternary structure, homodimer.

It is found in the cytoplasm. It catalyses the reaction D-sedoheptulose 7-phosphate + D-glyceraldehyde 3-phosphate = D-erythrose 4-phosphate + beta-D-fructose 6-phosphate. Its pathway is carbohydrate degradation; pentose phosphate pathway; D-glyceraldehyde 3-phosphate and beta-D-fructose 6-phosphate from D-ribose 5-phosphate and D-xylulose 5-phosphate (non-oxidative stage): step 2/3. In terms of biological role, transaldolase is important for the balance of metabolites in the pentose-phosphate pathway. This Escherichia coli O157:H7 protein is Transaldolase A (talA).